A 260-amino-acid chain; its full sequence is UPF0246 protein SCO2297 (260 aa).

Belongs to the UPF0246 family.

The protein is UPF0246 protein SCO2297 of Streptomyces coelicolor (strain ATCC BAA-471 / A3(2) / M145).